A 338-amino-acid polypeptide reads, in one-letter code: 6-phosphogluconolactonase (338 aa).

This sequence belongs to the cycloisomerase 2 family.

The enzyme catalyses 6-phospho-D-glucono-1,5-lactone + H2O = 6-phospho-D-gluconate + H(+). The protein operates within carbohydrate degradation; pentose phosphate pathway; D-ribulose 5-phosphate from D-glucose 6-phosphate (oxidative stage): step 2/3. Functionally, catalyzes the hydrolysis of 6-phosphogluconolactone to 6-phosphogluconate. The protein is 6-phosphogluconolactonase of Blochmanniella floridana.